Reading from the N-terminus, the 746-residue chain is MDDNYRIFNKNLITNAARRGTPQVCTGNGGFEPQPFDKEYVLQKNKIEECITKTLQSIGDGRISASAYDTAWIALIKDVINRDLPLFPWSLEWIVSNQLRDGSWGDRDFFVPCDRLLSTLACVVALSTWNVHPNETERGILFVKENISKLEDGDDVHTTLGFEILFPALLERARNLGIEGLPYDDPTTQKICAERDLKLDRISKELIINEVPASLLLILEGLENLNWENILKLQSPDGSFLGSPATTAFVFMETKDESCLSYLKKTVQNFGGGAPSLYPVDILTRLLAVDRLQRLGISRFFHSQIEDCLSYIYRFWTGNGVFSGRDSEFCDVNDTSMAFRLLRLHGYNVSPNVFTNFKKGDEFSVYGDDEVVDSPSTMLNLYRASEVRFAGETILEEAKEFSHNFLQQRQGLPNQVLDNCLISKNLHTEIKYELETPWFASLPRLEARFFIERYNAVDEVCIGKSLYRLPDTNEGTYLELAKLDYNRCQEQHQMEWNHMQQWYEDCNLEEFGISKNDILEAHFLAAASIFEAERSGERVAWVKTQILSHILSTYYFIKQSHQDHKPQLSTEKAHIAGQPGKGFKNVQRIISILFEALTQMKKDALEGSNGDISDDLLHEAWGGWLKKLGEGETEERQEAELIARTINVCGGHILSKQILSHHEYKTLSQLTNQICHNLHNSKMIGKEMENEMQLLVQLVLQESSNGISKAIKQTFLVVAKAFYYRAYFSAKQIENHVSIILFEQLV.

A DXDD motif; degenerated motif is present at residues 331–334 (DVND).

Belongs to the terpene synthase family. Tpsc subfamily. As to expression, mostly expressed in stems, and, at low levels, in roots and leaves, but barely in flowers.

In Isodon rubescens (Rabdosia rubescens), this protein is Probably inactive copalyl diphosphate synthase 3.